The primary structure comprises 145 residues: D-aminoacyl-tRNA deacylase (145 aa).

A Gly-cisPro motif, important for rejection of L-amino acids motif is present at residues 137-138; that stretch reads GP.

It belongs to the DTD family. Homodimer.

Its subcellular location is the cytoplasm. It catalyses the reaction glycyl-tRNA(Ala) + H2O = tRNA(Ala) + glycine + H(+). The enzyme catalyses a D-aminoacyl-tRNA + H2O = a tRNA + a D-alpha-amino acid + H(+). Functionally, an aminoacyl-tRNA editing enzyme that deacylates mischarged D-aminoacyl-tRNAs. Also deacylates mischarged glycyl-tRNA(Ala), protecting cells against glycine mischarging by AlaRS. Acts via tRNA-based rather than protein-based catalysis; rejects L-amino acids rather than detecting D-amino acids in the active site. By recycling D-aminoacyl-tRNA to D-amino acids and free tRNA molecules, this enzyme counteracts the toxicity associated with the formation of D-aminoacyl-tRNA entities in vivo and helps enforce protein L-homochirality. In Pelobacter propionicus (strain DSM 2379 / NBRC 103807 / OttBd1), this protein is D-aminoacyl-tRNA deacylase.